Here is a 175-residue protein sequence, read N- to C-terminus: Endoribonuclease YbeY (175 aa).

Zn(2+)-binding residues include H121, H125, and H131. The tract at residues 154 to 175 is disordered; that stretch reads PDPYSPAQQESQAQPENTELNP. Positions 159 to 175 are enriched in polar residues; it reads PAQQESQAQPENTELNP.

The protein belongs to the endoribonuclease YbeY family. Requires Zn(2+) as cofactor.

The protein localises to the cytoplasm. In terms of biological role, single strand-specific metallo-endoribonuclease involved in late-stage 70S ribosome quality control and in maturation of the 3' terminus of the 16S rRNA. The chain is Endoribonuclease YbeY from Alcanivorax borkumensis (strain ATCC 700651 / DSM 11573 / NCIMB 13689 / SK2).